A 103-amino-acid chain; its full sequence is N(4)-acetylcytidine amidohydrolase (103 aa).

The ASCH domain maps to 6 to 92 (TFFERFEQDI…VIQEIYPGLE (87 aa)). Residue K20 is the Proton acceptor of the active site. T23 serves as the catalytic Nucleophile. E73 serves as the catalytic Proton donor.

This sequence belongs to the N(4)-acetylcytidine amidohydrolase family.

It carries out the reaction N(4)-acetylcytidine + H2O = cytidine + acetate + H(+). The enzyme catalyses N(4)-acetyl-2'-deoxycytidine + H2O = 2'-deoxycytidine + acetate + H(+). It catalyses the reaction N(4)-acetylcytosine + H2O = cytosine + acetate + H(+). In terms of biological role, catalyzes the hydrolysis of N(4)-acetylcytidine (ac4C). This chain is N(4)-acetylcytidine amidohydrolase, found in Shewanella sp. (strain MR-4).